We begin with the raw amino-acid sequence, 393 residues long: Putative F-box protein At1g55070 (393 aa).

Residues 29–74 (GEYFDRIPADLVIKILSKLSAKSMAKCRCVCKLLSSIIRQPNYNQL) form the F-box domain.

This chain is Putative F-box protein At1g55070, found in Arabidopsis thaliana (Mouse-ear cress).